A 166-amino-acid polypeptide reads, in one-letter code: Interferon gamma (166 aa).

A signal peptide spans 1-23 (MNYTSYILAFQLCVILGSSGCYC). The residue at position 24 (Q24) is a Pyrrolidone carboxylic acid. N-linked (GlcNAc...) asparagine glycans are attached at residues N39 and N106.

The protein belongs to the type II (or gamma) interferon family. As to quaternary structure, homodimer. Interacts with IFNGR1 (via extracellular domain); this interaction promotes IFNGR1 dimerization. In terms of tissue distribution, released primarily from activated T lymphocytes.

The protein resides in the secreted. Functionally, type II interferon produced by immune cells such as T-cells and NK cells that plays crucial roles in antimicrobial, antiviral, and antitumor responses by activating effector immune cells and enhancing antigen presentation. Primarily signals through the JAK-STAT pathway after interaction with its receptor IFNGR1 to affect gene regulation. Upon IFNG binding, IFNGR1 intracellular domain opens out to allow association of downstream signaling components JAK2, JAK1 and STAT1, leading to STAT1 activation, nuclear translocation and transcription of IFNG-regulated genes. Many of the induced genes are transcription factors such as IRF1 that are able to further drive regulation of a next wave of transcription. Plays a role in class I antigen presentation pathway by inducing a replacement of catalytic proteasome subunits with immunoproteasome subunits. In turn, increases the quantity, quality, and repertoire of peptides for class I MHC loading. Increases the efficiency of peptide generation also by inducing the expression of activator PA28 that associates with the proteasome and alters its proteolytic cleavage preference. Up-regulates as well MHC II complexes on the cell surface by promoting expression of several key molecules such as cathepsins B/CTSB, H/CTSH, and L/CTSL. Participates in the regulation of hematopoietic stem cells during development and under homeostatic conditions by affecting their development, quiescence, and differentiation. The chain is Interferon gamma (IFNG) from Camelus bactrianus (Bactrian camel).